The following is a 273-amino-acid chain: Multivesicular body subunit 12A (273 aa).

Residues 9–151 (GMPLAGLAWS…GFAIWCRKAK (143 aa)) form the MABP domain. Position 130 is a phosphothreonine (Thr-130). Residues 154-186 (RPVPKPRALSRDVRDLSLDSPGQPSKGGFPERT) form a disordered region. The short motif at 155–160 (PVPKPR) is the SH3-binding element. Residues Ser-163, Ser-170, Ser-195, and Ser-202 each carry the phosphoserine modification. The tract at residues 192–273 (SRASTLRRND…AAARLPPSVS (82 aa)) is interaction with TSG101, VPS37B and VPS28. Tyr-204 carries the post-translational modification Phosphotyrosine. Ser-207 bears the Phosphoserine mark. In terms of domain architecture, UMA spans 215 to 265 (MDGVPFTLHPRFEGKSCGPLAFSAFADLTIKSLADIEAEYNYGFVVEKTAA).

The protein belongs to the MVB12 family. As to quaternary structure, component of the ESCRT-I complex (endosomal sorting complex required for transport I) which consists of TSG101, VPS28, a VPS37 protein (VPS37A to -D) and MVB12A or MVB12B in a 1:1:1:1 stoichiometry. Interacts with CD2AP and CIN85/SH3KBP1. Interacts with CD2AP (via one of the SH3 domains). Interacts with TSG101; the association appears to be mediated by the TSG101-VPS37 binary subcomplex. Interacts with VPS28. Interacts with VPS37B; the association appears to be mediated by the TSG101-VPS37 binary subcomplex. Interacts with VPS37C; the association appears to be mediated by the TSG101-VPS37 binary subcomplex. Interacts with VPS37D; the association appears to be mediated by the TSG101-VPS37 binary subcomplex. Interacts with CEP55. Post-translationally, phosphorylated on Tyr-204 upon EGF stimulation. Phosphorylation is required for interaction with CD2AP and CIN85/SH3KBP1.

It localises to the cytoplasm. The protein resides in the cytoskeleton. Its subcellular location is the nucleus. It is found in the endosome. The protein localises to the microtubule organizing center. It localises to the centrosome. The protein resides in the late endosome membrane. Its function is as follows. Component of the ESCRT-I complex, a regulator of vesicular trafficking process. Required for the sorting of endocytic ubiquitinated cargos into multivesicular bodies. May be involved in the ligand-mediated internalization and down-regulation of EGF receptor. The polypeptide is Multivesicular body subunit 12A (MVB12A) (Bos taurus (Bovine)).